We begin with the raw amino-acid sequence, 456 residues long: Adenylosuccinate lyase (456 aa).

N(6)-(1,2-dicarboxyethyl)-AMP-binding positions include 15–16 (RY), 90–92 (NHD), and 122–123 (TS). Catalysis depends on His171, which acts as the Proton donor/acceptor. Gln247 is a binding site for N(6)-(1,2-dicarboxyethyl)-AMP. Ser295 serves as the catalytic Proton donor/acceptor. N(6)-(1,2-dicarboxyethyl)-AMP-binding positions include Ser296, 301–303 (KIN), Asn309, Arg335, and 340–344 (STVLR).

Belongs to the lyase 1 family. Adenylosuccinate lyase subfamily. As to quaternary structure, homotetramer. Residues from neighboring subunits contribute catalytic and substrate-binding residues to each active site.

It carries out the reaction N(6)-(1,2-dicarboxyethyl)-AMP = fumarate + AMP. It catalyses the reaction (2S)-2-[5-amino-1-(5-phospho-beta-D-ribosyl)imidazole-4-carboxamido]succinate = 5-amino-1-(5-phospho-beta-D-ribosyl)imidazole-4-carboxamide + fumarate. It functions in the pathway purine metabolism; AMP biosynthesis via de novo pathway; AMP from IMP: step 2/2. It participates in purine metabolism; IMP biosynthesis via de novo pathway; 5-amino-1-(5-phospho-D-ribosyl)imidazole-4-carboxamide from 5-amino-1-(5-phospho-D-ribosyl)imidazole-4-carboxylate: step 2/2. In terms of biological role, catalyzes two reactions in de novo purine nucleotide biosynthesis. Catalyzes the breakdown of 5-aminoimidazole- (N-succinylocarboxamide) ribotide (SAICAR or 2-[5-amino-1-(5-phospho-beta-D-ribosyl)imidazole-4-carboxamido]succinate) to 5-aminoimidazole-4-carboxamide ribotide (AICAR or 5-amino-1-(5-phospho-beta-D-ribosyl)imidazole-4-carboxamide) and fumarate, and of adenylosuccinate (ADS or N(6)-(1,2-dicarboxyethyl)-AMP) to adenosine monophosphate (AMP) and fumarate. This is Adenylosuccinate lyase (purB) from Buchnera aphidicola subsp. Schizaphis graminum (strain Sg).